We begin with the raw amino-acid sequence, 364 residues long: tRNA 2-selenouridine synthase (364 aa).

In terms of domain architecture, Rhodanese spans 14-137 (LLADTPLIDV…LRQTAIQATW (124 aa)). Catalysis depends on Cys-97, which acts as the S-selanylcysteine intermediate.

This sequence belongs to the SelU family. In terms of assembly, monomer.

The catalysed reaction is 5-methylaminomethyl-2-thiouridine(34) in tRNA + selenophosphate + (2E)-geranyl diphosphate + H2O + H(+) = 5-methylaminomethyl-2-selenouridine(34) in tRNA + (2E)-thiogeraniol + phosphate + diphosphate. It carries out the reaction 5-methylaminomethyl-2-thiouridine(34) in tRNA + (2E)-geranyl diphosphate = 5-methylaminomethyl-S-(2E)-geranyl-thiouridine(34) in tRNA + diphosphate. The enzyme catalyses 5-methylaminomethyl-S-(2E)-geranyl-thiouridine(34) in tRNA + selenophosphate + H(+) = 5-methylaminomethyl-2-(Se-phospho)selenouridine(34) in tRNA + (2E)-thiogeraniol. It catalyses the reaction 5-methylaminomethyl-2-(Se-phospho)selenouridine(34) in tRNA + H2O = 5-methylaminomethyl-2-selenouridine(34) in tRNA + phosphate. Functionally, involved in the post-transcriptional modification of the uridine at the wobble position (U34) of tRNA(Lys), tRNA(Glu) and tRNA(Gln). Catalyzes the conversion of 2-thiouridine (S2U-RNA) to 2-selenouridine (Se2U-RNA). Acts in a two-step process involving geranylation of 2-thiouridine (S2U) to S-geranyl-2-thiouridine (geS2U) and subsequent selenation of the latter derivative to 2-selenouridine (Se2U) in the tRNA chain. This chain is tRNA 2-selenouridine synthase, found in Salmonella heidelberg (strain SL476).